The chain runs to 159 residues: Eukaryotic translation initiation factor 5A-5 (159 aa).

Positions 1–12 (MSDEEHHFESKA) are enriched in basic and acidic residues. Residues 1-23 (MSDEEHHFESKADAGASKTYPQQ) are disordered. Lysine 52 is subject to Hypusine.

Belongs to the eIF-5A family. Lys-52 undergoes hypusination, a unique post-translational modification that consists in the addition of a butylamino group from spermidine to lysine side chain, leading to the formation of the unusual amino acid hypusine. eIF-5As are the only known proteins to undergo this modification, which is essential for their function.

In terms of biological role, translation factor that promotes translation elongation and termination, particularly upon ribosome stalling at specific amino acid sequence contexts. Binds between the exit (E) and peptidyl (P) site of the ribosome and promotes rescue of stalled ribosome: specifically required for efficient translation of polyproline-containing peptides as well as other motifs that stall the ribosome. Acts as a ribosome quality control (RQC) cofactor by joining the RQC complex to facilitate peptidyl transfer during CAT tailing step. The chain is Eukaryotic translation initiation factor 5A-5 (EIF5A5) from Solanum tuberosum (Potato).